An 80-amino-acid chain; its full sequence is Exodeoxyribonuclease 7 small subunit (80 aa).

Belongs to the XseB family. Heterooligomer composed of large and small subunits.

It is found in the cytoplasm. It carries out the reaction Exonucleolytic cleavage in either 5'- to 3'- or 3'- to 5'-direction to yield nucleoside 5'-phosphates.. In terms of biological role, bidirectionally degrades single-stranded DNA into large acid-insoluble oligonucleotides, which are then degraded further into small acid-soluble oligonucleotides. This is Exodeoxyribonuclease 7 small subunit from Pseudomonas fluorescens (strain SBW25).